We begin with the raw amino-acid sequence, 314 residues long: Dihydroorotate dehydrogenase (fumarate) (314 aa).

Substrate-binding positions include K46, 70-74 (NSMGL), and N130. An FMN-binding site is contributed by 46-47 (KS). N130 contacts FMN. Catalysis depends on nucleophile residues S132 and C133. The FMN site is built by K167 and I195. 196-197 (NS) serves as a coordination point for substrate. Residues G224, 252–253 (GG), and 274–275 (GT) contribute to the FMN site.

The protein belongs to the dihydroorotate dehydrogenase family. Type 1 subfamily. As to quaternary structure, homodimer. It depends on FMN as a cofactor.

It is found in the cytoplasm. The catalysed reaction is (S)-dihydroorotate + fumarate = orotate + succinate. Its pathway is pyrimidine metabolism; UMP biosynthesis via de novo pathway. Its function is as follows. Catalyzes the conversion of dihydroorotate to orotate with fumarate as the electron acceptor. This Saccharomyces paradoxus (Yeast) protein is Dihydroorotate dehydrogenase (fumarate) (URA1).